We begin with the raw amino-acid sequence, 151 residues long: High mobility group B protein 14 (151 aa).

Disordered stretches follow at residues 1 to 62 and 132 to 151; these read MTKR…QTKM and TKRMESGAHDESETDSDYSE. A compositionally biased stretch (low complexity) spans 7-20; it reads KSGPLSPSCSGGSS. The segment covering 35 to 56 has biased composition (basic residues); it reads RSTRLRLQPLRKPKTSPKKKPV. The segment at residues 63–132 is a DNA-binding region (HMG box); that stretch reads PKKPATAFFF…EFHRAMTEYT (70 aa). A compositionally biased stretch (basic and acidic residues) spans 132-142; sequence TKRMESGAHDE. Position 150 is a phosphoserine (Ser150).

It belongs to the HMGB family.

The protein resides in the nucleus. The polypeptide is High mobility group B protein 14 (HMGB14) (Arabidopsis thaliana (Mouse-ear cress)).